A 924-amino-acid chain; its full sequence is Isoleucine--tRNA ligase (924 aa).

The short motif at 57–67 (PYANGDIHMGH) is the 'HIGH' region element. Glutamate 552 provides a ligand contact to L-isoleucyl-5'-AMP. Residues 593 to 597 (KMSKS) carry the 'KMSKS' region motif. Lysine 596 provides a ligand contact to ATP. 4 residues coordinate Zn(2+): cysteine 891, cysteine 894, cysteine 911, and cysteine 914.

The protein belongs to the class-I aminoacyl-tRNA synthetase family. IleS type 1 subfamily. In terms of assembly, monomer. It depends on Zn(2+) as a cofactor.

Its subcellular location is the cytoplasm. It carries out the reaction tRNA(Ile) + L-isoleucine + ATP = L-isoleucyl-tRNA(Ile) + AMP + diphosphate. Functionally, catalyzes the attachment of isoleucine to tRNA(Ile). As IleRS can inadvertently accommodate and process structurally similar amino acids such as valine, to avoid such errors it has two additional distinct tRNA(Ile)-dependent editing activities. One activity is designated as 'pretransfer' editing and involves the hydrolysis of activated Val-AMP. The other activity is designated 'posttransfer' editing and involves deacylation of mischarged Val-tRNA(Ile). This chain is Isoleucine--tRNA ligase, found in Geobacillus thermodenitrificans (strain NG80-2).